A 209-amino-acid chain; its full sequence is Phosphoheptose isomerase (209 aa).

Residues Ile50–Ala209 enclose the SIS domain. Asn65–Gly67 is a binding site for substrate. His74 and Glu78 together coordinate Zn(2+). Substrate contacts are provided by residues Glu78, Asn109 to Asp110, Ser135 to Ser137, Ser140, and Gln188. Zn(2+) is bound by residues Gln188 and His196.

It belongs to the SIS family. GmhA subfamily. Zn(2+) is required as a cofactor.

The protein resides in the cytoplasm. It catalyses the reaction 2 D-sedoheptulose 7-phosphate = D-glycero-alpha-D-manno-heptose 7-phosphate + D-glycero-beta-D-manno-heptose 7-phosphate. It functions in the pathway carbohydrate biosynthesis; D-glycero-D-manno-heptose 7-phosphate biosynthesis; D-glycero-alpha-D-manno-heptose 7-phosphate and D-glycero-beta-D-manno-heptose 7-phosphate from sedoheptulose 7-phosphate: step 1/1. In terms of biological role, catalyzes the isomerization of sedoheptulose 7-phosphate in D-glycero-D-manno-heptose 7-phosphate. This Chlorobaculum parvum (strain DSM 263 / NCIMB 8327) (Chlorobium vibrioforme subsp. thiosulfatophilum) protein is Phosphoheptose isomerase.